We begin with the raw amino-acid sequence, 261 residues long: Kallikrein 1-related peptidase b16 (261 aa).

Positions 1–18 are cleaved as a signal peptide; it reads MWFLILFLALSLGGIDAA. The propeptide at 19–24 is activation peptide; sequence PPVQSR. One can recognise a Peptidase S1 domain in the interval 25–258; sequence IVGGFKCEKN…FNSWIKDTMM (234 aa). 5 cysteine pairs are disulfide-bonded: C31/C173, C50/C66, C152/C219, C184/C198, and C209/C234. H65 serves as the catalytic Charge relay system. N-linked (GlcNAc...) asparagine glycosylation occurs at N102. The Charge relay system role is filled by D120. The Charge relay system role is filled by S213.

Belongs to the peptidase S1 family. Kallikrein subfamily.

The catalysed reaction is Cleavage of the Leu-|-Leu bond in synthetic tetradecapeptide renin substrate, to produce angiotensin I, but not active on natural angiotensinogen. Also hydrolyzes Bz-Arg-p-nitroanilide.. This is Kallikrein 1-related peptidase b16 (Klk1b16) from Mus musculus (Mouse).